Consider the following 274-residue polypeptide: Penicillin-insensitive murein endopeptidase (274 aa).

The N-terminal stretch at M1–A19 is a signal peptide. 3 disulfides stabilise this stretch: C44-C265, C187-C235, and C216-C223. Residues H110, H113, D120, D147, H150, and H211 each contribute to the Zn(2+) site. A disordered region spans residues D225–L274.

It belongs to the peptidase M74 family. In terms of assembly, dimer. Requires Zn(2+) as cofactor.

The protein resides in the periplasm. Murein endopeptidase that cleaves the D-alanyl-meso-2,6-diamino-pimelyl amide bond that connects peptidoglycan strands. Likely plays a role in the removal of murein from the sacculus. This chain is Penicillin-insensitive murein endopeptidase, found in Salmonella heidelberg (strain SL476).